Here is a 208-residue protein sequence, read N- to C-terminus: MSLLIGYFLGSIPSAYLVTRRLTGRDIRQMGGGNMGGLNTFREVGVGAGAAVVLMDLAKGALAVSVAYYLLIQNAQWVILTGFAAVIGHNWPIWLDFKGGKGLGPAFGAMLFLLPVYGLPQHLLILALLVFIPLAITRNIALATGIALFSLPFLVWYGSHSEFATLISVLLFLMIGIKFVLDNRKNLRDPANRRNLIVDHWKRPDKNS.

5 consecutive transmembrane segments (helical) span residues 52-72, 77-97, 112-132, 140-160, and 161-181; these read VVLM…YLLI, WVIL…WLDF, FLLP…LVFI, IALA…YGSH, and SEFA…KFVL.

The protein belongs to the PlsY family. In terms of assembly, probably interacts with PlsX.

It is found in the cell membrane. It catalyses the reaction an acyl phosphate + sn-glycerol 3-phosphate = a 1-acyl-sn-glycero-3-phosphate + phosphate. It participates in lipid metabolism; phospholipid metabolism. Its function is as follows. Catalyzes the transfer of an acyl group from acyl-phosphate (acyl-PO(4)) to glycerol-3-phosphate (G3P) to form lysophosphatidic acid (LPA). This enzyme utilizes acyl-phosphate as fatty acyl donor, but not acyl-CoA or acyl-ACP. The sequence is that of Glycerol-3-phosphate acyltransferase 1 from Dehalococcoides mccartyi (strain ATCC BAA-2266 / KCTC 15142 / 195) (Dehalococcoides ethenogenes (strain 195)).